Reading from the N-terminus, the 367-residue chain is Protein NDRG4-B (367 aa).

Residues 1–12 (MSELRFPEEKPL) are compositionally biased toward basic and acidic residues. 2 disordered regions span residues 1–21 (MSELRFPEEKPLLRGQDTEME) and 333–367 (LTSASSVDGARPRPCTQSESSDGIGQINHTMEVSC). Polar residues predominate over residues 347 to 367 (CTQSESSDGIGQINHTMEVSC).

It belongs to the NDRG family.

The protein resides in the cytoplasm. Its subcellular location is the cytosol. Contributes to the maintenance of intracerebral BDNF levels within the normal range. May enhance growth factor-induced ERK1 and ERK2 phosphorylation. May attenuate growth factor-promoted ELK1 phosphorylation in a microtubule-dependent manner. In Xenopus laevis (African clawed frog), this protein is Protein NDRG4-B (ndrg4-b).